We begin with the raw amino-acid sequence, 272 residues long: Aurora kinase (272 aa).

A Protein kinase domain is found at 10–263 (FEIGRLLGRG…LTEALNHPFI (254 aa)). ATP contacts are provided by residues 16-24 (LGRGKFGQV) and Lys39. Asp134 (proton acceptor) is an active-site residue.

This sequence belongs to the protein kinase superfamily. Ser/Thr protein kinase family. Aurora subfamily.

Its subcellular location is the nucleus. The protein resides in the cytoplasm. It localises to the cytoskeleton. The protein localises to the spindle. It is found in the chromosome. Its subcellular location is the centromere. The protein resides in the kinetochore. It carries out the reaction L-seryl-[protein] + ATP = O-phospho-L-seryl-[protein] + ADP + H(+). The catalysed reaction is L-threonyl-[protein] + ATP = O-phospho-L-threonyl-[protein] + ADP + H(+). Functionally, component of the chromosomal passenger complex (CPC), a complex that acts as a key regulator of chromosome segregation and cytokinesis. Has a role in error-correction of aberrent kinetochore-microtubule attachments to ensure that sister kinetochores become bioriented and connect to opposite poles by promoting spindle assembly checkpoint signaling. The chain is Aurora kinase (IPL1) from Encephalitozoon cuniculi (strain GB-M1) (Microsporidian parasite).